A 567-amino-acid polypeptide reads, in one-letter code: Geranylgeranyl transferase type-2 subunit alpha (567 aa).

PFTA repeat units follow at residues 44–78, 88–122, 124–158, 159–193, 207–241, and 363–397; these read LDES…QLET, LVKA…RLPE, NWTR…QAAV, PPAE…QLHP, VLLK…RADP, and VLQS…ALDP. Serine 98 is modified (phosphoserine). LRR repeat units lie at residues 442–463, 464–486, 487–508, 509–530, and 534–555; these read EVRV…EQLL, LVTH…AALR, CLEV…TNLP, RLQE…QPLA, and RLVL…LEQL.

The protein belongs to the protein prenyltransferase subunit alpha family. In terms of assembly, heterotrimer composed of RABGGTA, RABGGTB and CHM; within this trimer, RABGGTA and RABGGTB form the catalytic component B, while CHM (component A) mediates peptide substrate binding. The Rab GGTase dimer (RGGT) interacts with CHM (component A) prior to Rab protein binding; the association is stabilized by geranylgeranyl pyrophosphate (GGpp). The CHM:RGGT:Rab complex is destabilized by GGpp. Interacts with non-phosphorylated form of RAB8A; phosphorylation of RAB8A at 'Thr-72' disrupts this interaction.

The catalysed reaction is geranylgeranyl diphosphate + L-cysteinyl-[protein] = S-geranylgeranyl-L-cysteinyl-[protein] + diphosphate. The enzymatic reaction requires the aid of a Rab escort protein (also called component A), such as CHM. Functionally, catalyzes the transfer of a geranylgeranyl moiety from geranylgeranyl diphosphate to both cysteines of Rab proteins with the C-terminal sequence -XXCC, -XCXC and -CCXX, such as RAB1A, RAB3A, RAB5A and RAB7A. In Homo sapiens (Human), this protein is Geranylgeranyl transferase type-2 subunit alpha (RABGGTA).